The sequence spans 747 residues: Small G protein signaling modulator 3 (747 aa).

Residues 111-302 (GVPHSMRPQL…RLWDLFFYEG (192 aa)) form the Rab-GAP TBC domain. A Phosphoserine modification is found at S403. The stretch at 412 to 435 (EDDLEAMKAKNIKQTELVADLREA) forms a coiled coil. Residues 477–536 (GHPRRAKALLDFERHDDDELGFRKNDIITIVSQKDEHCWVGELNGLRGWFPAKFVEVLDE) enclose the SH3 domain. An RUN domain is found at 552-715 (GVTDLVRGTL…FAFSLSQDWE (164 aa)).

This sequence belongs to the small G protein signaling modulator family. As to quaternary structure, interacts with GJA1. Interaction with GJA1 induces its degradation. Interacts via its RUN domain with the C-terminal region of NF2. Interacts with RAB3A, RAB4A, RAB5A, RAB8A, RAB11A, RAP1A, RAP1B, RAP2A, RAP2B and PDCD6I. No interaction with RAB27A.

It is found in the cytoplasm. Functionally, may play a cooperative role in NF2-mediated growth suppression of cells. The chain is Small G protein signaling modulator 3 from Bos taurus (Bovine).